Reading from the N-terminus, the 316-residue chain is uncharacterized protein (316 aa).

It belongs to the chlamydial CPn_0441/CT_007/TC_0275 family.

This is an uncharacterized protein from Chlamydia pneumoniae (Chlamydophila pneumoniae).